The following is a 404-amino-acid chain: Probable eukaryotic initiation factor 4A (404 aa).

Positions 1–28 (MAQQGKVEPQDQDSFLDDQPGIRPIPSF) are disordered. A Q motif motif is present at residues 26–54 (PSFDDMPLHQNLLRGIYSHGFEKPSSIQQ). In terms of domain architecture, Helicase ATP-binding spans 57–231 (IVPFTRGGDI…KKFMRDPTRI (175 aa)). An ATP-binding site is contributed by 70–77 (AQSGTGKT). Residues 179–182 (DEAD) carry the DEAD box motif. The Helicase C-terminal domain maps to 242-402 (GIKQFFIAVE…ELPVDFAAYL (161 aa)).

The protein belongs to the DEAD box helicase family. eIF4A subfamily. In terms of assembly, eIF4F is a multi-subunit complex, the composition of which varies with external and internal environmental conditions. It is composed of at least EIF4A, EIF4E and EIF4G.

It catalyses the reaction ATP + H2O = ADP + phosphate + H(+). ATP-dependent RNA helicase which is a subunit of the eIF4F complex involved in cap recognition and is required for mRNA binding to ribosome. In the current model of translation initiation, eIF4A unwinds RNA secondary structures in the 5'-UTR of mRNAs which is necessary to allow efficient binding of the small ribosomal subunit, and subsequent scanning for the initiator codon. The chain is Probable eukaryotic initiation factor 4A from Trypanosoma brucei brucei (strain 927/4 GUTat10.1).